Reading from the N-terminus, the 129-residue chain is MAKQPTRARKRVRKQVADGVAHIHASFNNTIVTITDRQGNALAWATAGGSGFRGSRKSTPFAAQVAAERCGEMAKEYGVKNLEVMVKGPGPGRESTIRALNAAGYRITNIVDATPIPHNGCRPPKKRRV.

This sequence belongs to the universal ribosomal protein uS11 family. As to quaternary structure, part of the 30S ribosomal subunit. Interacts with proteins S7 and S18. Binds to IF-3.

Located on the platform of the 30S subunit, it bridges several disparate RNA helices of the 16S rRNA. Forms part of the Shine-Dalgarno cleft in the 70S ribosome. This is Small ribosomal subunit protein uS11 from Aliivibrio fischeri (strain ATCC 700601 / ES114) (Vibrio fischeri).